A 398-amino-acid chain; its full sequence is O-methyltransferase mpaG (398 aa).

Asp264 serves as a coordination point for S-adenosyl-L-methionine. The Proton acceptor role is filled by His306. Residues Glu335 and Glu362 contribute to the active site.

It belongs to the class I-like SAM-binding methyltransferase superfamily. Cation-independent O-methyltransferase family. COMT subfamily.

The protein resides in the cytoplasm. The protein localises to the cytosol. The catalysed reaction is (4E,8E)-10-(4,6-dihydroxy-7-methyl-3-oxo-1,3-dihydro-2-benzofuran-5-yl)-4,8-dimethyldeca-4,8-dienoate + S-adenosyl-L-methionine = (4E,8E)-10-(4-hydroxy-6-methoxy-7-methyl-3-oxo-1,3-dihydro-2-benzofuran-5-yl)-4,8-dimethyldeca-4,8-dienoate + S-adenosyl-L-homocysteine + H(+). The protein operates within secondary metabolite biosynthesis; terpenoid biosynthesis. Functionally, O-methyltransferase; part of the gene cluster that mediates the biosynthesis of mycophenolic acid (MPA), the first isolated antibiotic natural product in the world obtained from a culture of Penicillium brevicompactum in 1893. MpaC methylates farnesyl-DHMP-3C (FDHMP-3C) to yield MFDHMP-3C. The first step of the pathway is the synthesis of 5-methylorsellinic acid (5MOA) by the cytosolic polyketide synthase mpaC. 5MOA is then converted to the phthalide compound 5,7-dihydroxy-4,6-dimethylphthalide (DHMP) by the endoplasmic reticulum-bound cytochrome P450 monooxygenase mpaDE. MpaDE first catalyzes hydroxylation of 5-MOA to 4,6-dihydroxy-2-(hydroxymethyl)-3-methylbenzoic acid (DHMB). MpaDE then acts as a lactone synthase that catalyzes the ring closure to convert DHMB into DHMP. The next step is the prenylation of DHMP by the Golgi apparatus-associated prenyltransferase mpaA to yield farnesyl-DHMP (FDHMP). The ER-bound oxygenase mpaB then mediates the oxidative cleavage the C19-C20 double bond in FDHMP to yield FDHMP-3C via a mycophenolic aldehyde intermediate. The O-methyltransferase mpaG catalyzes the methylation of FDHMP-3C to yield MFDHMP-3C. After the cytosolic methylation of FDHMP-3C, MFDHMP-3C enters into peroxisomes probably via free diffusion due to its low molecular weight. Upon a peroxisomal CoA ligation reaction, catalyzed by a beta-oxidation component enzyme acyl-CoA ligase ACL891, MFDHMP-3C-CoA would then be restricted to peroxisomes for the following beta-oxidation pathway steps. The peroxisomal beta-oxidation machinery than converts MFDHMP-3C-CoA into MPA_CoA, via a beta-oxidation chain-shortening process. Finally mpaH acts as a peroxisomal acyl-CoA hydrolase with high substrate specificity toward MPA-CoA to release the final product MPA. This Penicillium roqueforti (strain FM164) protein is O-methyltransferase mpaG.